The sequence spans 221 residues: Thiol:disulfide interchange protein TlpA (221 aa).

The Cytoplasmic portion of the chain corresponds to 1-11 (MLDTKPSATRR). The chain crosses the membrane as a helical span at residues 12 to 35 (IPLVIATVAVGGLAGFAALYGLGL). Residues 36–221 (SRAPTGDPAC…AATGKAAAAL (186 aa)) are Periplasmic-facing. 2 disulfide bridges follow: cysteine 45/cysteine 190 and cysteine 107/cysteine 110. One can recognise a Thioredoxin domain in the interval 69–215 (ASAPLKLPDL…ALKLIRAATG (147 aa)).

The protein belongs to the thioredoxin family. As to quaternary structure, monomer.

It is found in the cell membrane. In terms of biological role, involved in cytochrome aa3 assembly. The polypeptide is Thiol:disulfide interchange protein TlpA (tlpA) (Bradyrhizobium diazoefficiens (strain JCM 10833 / BCRC 13528 / IAM 13628 / NBRC 14792 / USDA 110)).